Here is a 33-residue protein sequence, read N- to C-terminus: Mu-theraphotoxin-Osp1a (33 aa).

3 disulfides stabilise this stretch: Cys-2–Cys-17, Cys-9–Cys-22, and Cys-16–Cys-29.

Belongs to the neurotoxin 10 (Hwtx-1) family. In terms of tissue distribution, expressed by the venom gland.

The protein localises to the secreted. Voltage-gated sodium channel Nav1.7/SCN9A inhibitor. This chain is Mu-theraphotoxin-Osp1a, found in Orphnaecus sp. (strain Sibaliw/Philippines) (Tarantula spider).